A 240-amino-acid chain; its full sequence is Coiled-coil domain-containing protein 152 (240 aa).

Residues 55 to 223 (MQTKEVAMKQ…LEQRLSVSKD (169 aa)) are a coiled coil.

This Bos taurus (Bovine) protein is Coiled-coil domain-containing protein 152 (CCDC152).